The sequence spans 208 residues: ATP-dependent dethiobiotin synthetase BioD (208 aa).

11-16 (EVGKTF) is an ATP binding site. Threonine 15 serves as a coordination point for Mg(2+). Lysine 31 is a catalytic residue. A substrate-binding site is contributed by serine 35. Residues aspartate 42, 95–98 (ETSG), and 155–156 (NQ) contribute to the ATP site. Residues aspartate 42 and glutamate 95 each coordinate Mg(2+).

This sequence belongs to the dethiobiotin synthetase family. In terms of assembly, homodimer. Mg(2+) is required as a cofactor.

Its subcellular location is the cytoplasm. The catalysed reaction is (7R,8S)-7,8-diammoniononanoate + CO2 + ATP = (4R,5S)-dethiobiotin + ADP + phosphate + 3 H(+). It functions in the pathway cofactor biosynthesis; biotin biosynthesis; biotin from 7,8-diaminononanoate: step 1/2. Its function is as follows. Catalyzes a mechanistically unusual reaction, the ATP-dependent insertion of CO2 between the N7 and N8 nitrogen atoms of 7,8-diaminopelargonic acid (DAPA, also called 7,8-diammoniononanoate) to form a ureido ring. This Chlamydia felis (strain Fe/C-56) (Chlamydophila felis) protein is ATP-dependent dethiobiotin synthetase BioD.